A 412-amino-acid polypeptide reads, in one-letter code: MNAEIIAVGTELLLGQIANTNAQFLSEKLASIGINVYYHTVVGDNNKRLQKAIEAAEERADILIFTGGLGPTKDDLTKETIAASLDEELVYDEKALALISNYFKRTGREFTENNKKQALVLNGATVFANDHGMAPGMGVNKNRKSYILLPGPPKEMKPMYVSYVEPFLRNFTTGENIYSRVLRFFGIGESQLEVKVQDLIDGQTNPTIAPLANDGEVTLRLTAKHQNVSEAEKLIQHVEDLILERVGEFFYGYDQEFLHYKAIELLKRKGLTLACAESLTGGLFGNQVTENAGVSSVFKGGVICYHNDVKQYVLRVPEEVLHTDGAVSKECARYLAENVKDVLKADIGISFTGVAGPDASEQKEPGTVFVGLSIKDEPTVVFPLNLSGSRQQIRERTAKYGFYHLYKKLEEI.

Belongs to the CinA family.

This Bacillus cereus (strain ATCC 14579 / DSM 31 / CCUG 7414 / JCM 2152 / NBRC 15305 / NCIMB 9373 / NCTC 2599 / NRRL B-3711) protein is Putative competence-damage inducible protein.